The primary structure comprises 309 residues: Olfactory receptor 1A1 (309 aa).

Residues methionine 1–aspartate 25 are Extracellular-facing. Residue asparagine 5 is glycosylated (N-linked (GlcNAc...) asparagine). A helical transmembrane segment spans residues phenylalanine 26 to isoleucine 49. Residues cysteine 50–asparagine 57 are Cytoplasmic-facing. A helical transmembrane segment spans residues proline 58 to proline 79. Residues lysine 80–glutamine 100 are Extracellular-facing. Cysteine 97 and cysteine 189 form a disulfide bridge. A helical transmembrane segment spans residues methionine 101–tyrosine 120. Over aspartate 121 to arginine 139 the chain is Cytoplasmic. The chain crosses the membrane as a helical span at residues serine 140–proline 158. Over histidine 159–histidine 195 the chain is Extracellular. A helical membrane pass occupies residues valine 196–isoleucine 218. Residues arginine 219–lysine 235 lie on the Cytoplasmic side of the membrane. Residues alanine 236 to tyrosine 258 traverse the membrane as a helical segment. At phenylalanine 259 to alanine 270 the chain is on the extracellular side. N-linked (GlcNAc...) asparagine glycosylation is present at asparagine 264. Residues valine 271–leucine 290 traverse the membrane as a helical segment. Residues arginine 291–serine 309 lie on the Cytoplasmic side of the membrane.

Belongs to the G-protein coupled receptor 1 family.

It localises to the cell membrane. Its function is as follows. Odorant receptor. This is Olfactory receptor 1A1 (OR1A1) from Homo sapiens (Human).